Here is a 630-residue protein sequence, read N- to C-terminus: tRNA uridine 5-carboxymethylaminomethyl modification enzyme MnmG (630 aa).

An FAD-binding site is contributed by 15–20; that stretch reads GAGHAG. 276–290 serves as a coordination point for NAD(+); the sequence is GPRYCPSIEDKIVRF.

The protein belongs to the MnmG family. In terms of assembly, homodimer. Heterotetramer of two MnmE and two MnmG subunits. It depends on FAD as a cofactor.

It is found in the cytoplasm. In terms of biological role, NAD-binding protein involved in the addition of a carboxymethylaminomethyl (cmnm) group at the wobble position (U34) of certain tRNAs, forming tRNA-cmnm(5)s(2)U34. This is tRNA uridine 5-carboxymethylaminomethyl modification enzyme MnmG from Latilactobacillus sakei subsp. sakei (strain 23K) (Lactobacillus sakei subsp. sakei).